The sequence spans 209 residues: T-cell surface glycoprotein CD8 beta chain (209 aa).

Residues 1–21 (MRPRMWLLLSAQLAALHGNSV) form the signal peptide. One can recognise an Ig-like V-type domain in the interval 22 to 131 (LQQTPAYIMV…TLIFGTGTQL (110 aa)). Topologically, residues 22–169 (LQQTPAYIMV…ETRKGPLCSP (148 aa)) are extracellular. C41 and C115 are disulfide-bonded. The N-linked (GlcNAc...) asparagine glycan is linked to N101. Residues 170–190 (ITLSLLVAGILVLLVSLGVAI) traverse the membrane as a helical segment. At 191–209 (HLYCRQRRARLRFMKQFYK) the chain is on the cytoplasmic side.

As to quaternary structure, forms disulfide-linked heterodimers with CD8A at the cell surface. Interacts with CD3D; this interaction couples TCR-CD3 with CD8. Interacts with LCK. Phosphorylated as a consequence of T-cell activation. Post-translationally, palmitoylated at the cytoplasmic tail and thereby targets the heterodimer CD8A/CD8B to lipid rafts unlike CD8A homodimers.

Its subcellular location is the cell membrane. Its function is as follows. Integral membrane glycoprotein that plays an essential role in the immune response and serves multiple functions in responses against both external and internal offenses. In T-cells, functions primarily as a coreceptor for MHC class I molecule:peptide complex. The antigens presented by class I peptides are derived from cytosolic proteins while class II derived from extracellular proteins. Interacts simultaneously with the T-cell receptor (TCR) and the MHC class I proteins presented by antigen presenting cells (APCs). In turn, recruits the Src kinase LCK to the vicinity of the TCR-CD3 complex. A palmitoylation site in the cytoplasmic tail of CD8B chain contributes to partitioning of CD8 into the plasma membrane lipid rafts where signaling proteins are enriched. Once LCK recruited, it initiates different intracellular signaling pathways by phosphorylating various substrates ultimately leading to lymphokine production, motility, adhesion and activation of cytotoxic T-lymphocytes (CTLs). Additionally, plays a critical role in thymic selection of CD8+ T-cells. This is T-cell surface glycoprotein CD8 beta chain (CD8B) from Saimiri sciureus (Common squirrel monkey).